The chain runs to 286 residues: Flagellar filament 31.3 kDa core protein (286 aa).

The protein belongs to the bacterial flagellin family. The core of the flagellum consists of several antigenically related polypeptides. In terms of processing, glycosylated. Glycosylation is not essential for motility.

Its subcellular location is the periplasmic flagellum. It is found in the periplasm. Component of the core of the flagella. This Treponema maltophilum protein is Flagellar filament 31.3 kDa core protein (flaB2).